The sequence spans 240 residues: MDLRLIFGPTCTGKTSTAIALAQQTGLPVLSLDRVQCCPQLSTGSGRPTVEELKGTTRLYLDDRPLVKGIIAAEQAHERLIAEVYNYEAHGGLILEGGSISLLKCMAQSGYWSADFRWHIIRHKLADEETFMKAAKARVKQMLCPAIGPSLIQELVYLWNEPRLRPILKEIDGYRYAMLFASQNRITPDMLLQLDADMEGKLIHGIAQEYLIHARRQEHEFPPVSAAAFEGFEGPPFGAY.

It belongs to the isopentenyl transferase family.

The catalysed reaction is dimethylallyl diphosphate + AMP = N(6)-(dimethylallyl)adenosine 5'-phosphate + diphosphate. Its function is as follows. Transfers dimethylallyl groups to AMP as part of the biosynthesis of cytokinin phytohormones. This chain is Adenylate dimethylallyltransferase (ipt), found in Agrobacterium vitis (Rhizobium vitis).